We begin with the raw amino-acid sequence, 324 residues long: MASEALHQVGDGEEAVLKKENFNMMNALDQLPKPFPNPKSMNRTVTTKGLPLSSKGNLVNFLEDDTINLPKPMPVDDSDCSSDDTSISAFSSTLLNPIKLAVTQPNSSFFAGMLEGELNKLSFSPMAKNTEKEDLALGPCPCPSKCQMATRGLLDLDNPELETETSSTHSESSVVVDLPDTPFIFEHTVSNSTAVISWTYALGKQPVSFYQVLLQEAAETQENELPKAKNRPWIFNKILGTTVKLMELKPNTCYCLTVRAANTAGVGKWCKPYKFATLATDFSSFPENNPIQITVRRKEPQRKIVSIGLEEMRRLEDLEYLFPY.

In terms of domain architecture, Fibronectin type-III spans 179 to 280; the sequence is PDTPFIFEHT…KPYKFATLAT (102 aa).

The polypeptide is Fibronectin type III domain-containing protein 8 (FNDC8) (Macaca fascicularis (Crab-eating macaque)).